A 37-amino-acid polypeptide reads, in one-letter code: Large ribosomal subunit protein bL36 (37 aa).

This sequence belongs to the bacterial ribosomal protein bL36 family.

The sequence is that of Large ribosomal subunit protein bL36 from Treponema denticola (strain ATCC 35405 / DSM 14222 / CIP 103919 / JCM 8153 / KCTC 15104).